We begin with the raw amino-acid sequence, 546 residues long: Chaperonin GroEL (546 aa).

ATP is bound by residues 30 to 33, Lys-51, 87 to 91, Gly-415, 479 to 481, and Asp-495; these read TLGP, DGTTT, and NAA.

Belongs to the chaperonin (HSP60) family. Forms a cylinder of 14 subunits composed of two heptameric rings stacked back-to-back. Interacts with the co-chaperonin GroES.

The protein localises to the cytoplasm. It catalyses the reaction ATP + H2O + a folded polypeptide = ADP + phosphate + an unfolded polypeptide.. Its function is as follows. Together with its co-chaperonin GroES, plays an essential role in assisting protein folding. The GroEL-GroES system forms a nano-cage that allows encapsulation of the non-native substrate proteins and provides a physical environment optimized to promote and accelerate protein folding. This Pseudomonas putida (strain ATCC 47054 / DSM 6125 / CFBP 8728 / NCIMB 11950 / KT2440) protein is Chaperonin GroEL.